We begin with the raw amino-acid sequence, 913 residues long: Cadherin-4 (913 aa).

Positions 1 to 19 (MRTGSRLLLVLLVWGSAAA) are cleaved as a signal peptide. The propeptide occupies 20-166 (LNGDLTVRPT…SAKGLRRQKR (147 aa)). Cadherin domains lie at 167–274 (DWVI…RPEF), 275–389 (INQV…PPEF), 390–504 (TTST…APYF), 505–610 (PTNH…DNAP), and 611–721 (ELLP…TIGA). The Extracellular portion of the chain corresponds to 167 to 731 (DWVIPPINVP…VAAAGLGTGA (565 aa)). Residues N280, N409, N554, N629, N658, and N699 are each glycosylated (N-linked (GlcNAc...) asparagine). Residues 732–753 (IIAILICIIILLTMVLLFVVWM) traverse the membrane as a helical segment. Topologically, residues 754–913 (KRREKERHTK…ADMYGGGEED (160 aa)) are cytoplasmic.

In terms of tissue distribution, embryonic brain and neuronal retina.

The protein resides in the cell membrane. Its function is as follows. Cadherins are calcium-dependent cell adhesion proteins. They preferentially interact with themselves in a homophilic manner in connecting cells; cadherins may thus contribute to the sorting of heterogeneous cell types. May play an important role in retinal development. This Gallus gallus (Chicken) protein is Cadherin-4 (CDH4).